Reading from the N-terminus, the 1200-residue chain is SR-related and CTD-associated factor 4 (1200 aa).

The region spanning 1–139 is the CID domain; sequence MDAVNAFNQE…PLLDMAAGTS (139 aa). Lysine 49 is modified (N6-acetyllysine). Residues 140 to 153 are compositionally biased toward polar residues; sequence NAAPGAENVTNNEG. Disordered regions lie at residues 140–172, 299–324, and 346–566; these read NAAPGAENVTNNEGSPPPPVKVSSELPQAPTNS, VPASSATSPPPPQAPFGYPGDGMQQP, and SMQH…QIKS. Serine 154 carries the phosphoserine modification. Composition is skewed to pro residues over residues 367–390 and 399–461; these read APPPFPPMPQPGMPQPGMPQPGMP and LPQP…PPVQ. A compositionally biased stretch (low complexity) spans 462–471; that stretch reads PTFQPTFQPQ. The segment covering 493 to 503 has biased composition (basic and acidic residues); sequence EVKRHVPESRK. The segment covering 504 to 541 has biased composition (basic residues); that stretch reads SRSRSPKRRRSRSGSRSRRSRHRRSRSRSRDRRRHSPR. A compositionally biased stretch (basic and acidic residues) spans 543–558; the sequence is RSQERRDREKERERRQ. The RRM domain maps to 574–648; it reads TTLWVGQLDK…KSIKIAWALN (75 aa). Disordered stretches follow at residues 696–724, 834–875, and 927–1200; these read WKGIPKKPENEVAQNGGAEASHTEPVSPI, VSGA…SLLG, and PPHM…EAPR. Serine 722 carries the post-translational modification Phosphoserine. Pro residues-rich tracts occupy residues 856-868 and 927-958; these read PAAPTSLPTPPVT and PPHMMHRGPPPGPGGFAMPPPHGMKGPFPPHG. Over residues 965–978 the composition is skewed to gly residues; sequence GMPGLGGPGPGPGG. A compositionally biased stretch (low complexity) spans 986 to 1036; that stretch reads QQQPQQQQQQQQQQQQQQQQQQQQPPPQQSQTQQQPAPSQQPAPAQQQPQQ. Serine 1058 is modified (phosphoserine). Positions 1063-1139 are enriched in basic and acidic residues; it reads VENDRERYGS…RGKEKHEVAD (77 aa). Residues 1153–1162 show a composition bias toward polar residues; that stretch reads QVGNTDTVSE. A Phosphoserine modification is found at serine 1178.

As to quaternary structure, interacts with POLR2A; via C-terminal heptapeptide repeat domain (CTD) phosphorylated at 'Ser-2' and 'Ser-5'.

The protein localises to the nucleus. Its function is as follows. Anti-terminator protein required to prevent early mRNA termination during transcription. Together with SCAF8, acts by suppressing the use of early, alternative poly(A) sites, thereby preventing the accumulation of non-functional truncated proteins. Mechanistically, associates with the phosphorylated C-terminal heptapeptide repeat domain (CTD) of the largest RNA polymerase II subunit (POLR2A), and subsequently binds nascent RNA upstream of early polyadenylation sites to prevent premature mRNA transcript cleavage and polyadenylation. Independently of SCAF8, also acts as a suppressor of transcriptional readthrough. This Rattus norvegicus (Rat) protein is SR-related and CTD-associated factor 4.